We begin with the raw amino-acid sequence, 357 residues long: Arginine kinase (357 aa).

At Ala2 the chain carries N-acetylalanine. The 83-residue stretch at Lys9–Lys91 folds into the Phosphagen kinase N-terminal domain. Gly64–Tyr68 serves as a coordination point for L-arginine. Positions Phe119–Met356 constitute a Phosphagen kinase C-terminal domain. Residues Ser122–Arg126 and His185 contribute to the ATP site. Glu225 contributes to the L-arginine binding site. Arg229 contributes to the ATP binding site. Residue Cys271 participates in L-arginine binding. Residues Arg280–His284 and Arg309–Glu314 contribute to the ATP site. Residue Glu314 coordinates L-arginine.

The protein belongs to the ATP:guanido phosphotransferase family.

It catalyses the reaction L-arginine + ATP = N(omega)-phospho-L-arginine + ADP + H(+). In Eriocheir sinensis (Chinese mitten crab), this protein is Arginine kinase.